We begin with the raw amino-acid sequence, 141 residues long: Actin-depolymerizing factor 9 (141 aa).

Ser8 is subject to Phosphoserine. The ADF-H domain occupies 8 to 141 (SGMWMTDDCK…GFDKIQDRAK (134 aa)).

This sequence belongs to the actin-binding proteins ADF family.

The protein localises to the cytoplasm. It is found in the cytoskeleton. In terms of biological role, does not display typical F-actin depolymerizing activity. Exhibits a high ability to stabilize and cross-link actin filaments. Functions as an actin bundling protein with the highest efficiency under acidic conditions. May play a role in the modulation of levels of histone H3 lysine 4 trimethylation and H3 lysine 9 and 14 acetylation at the FLC locus. This is Actin-depolymerizing factor 9 (ADF9) from Arabidopsis thaliana (Mouse-ear cress).